Reading from the N-terminus, the 292-residue chain is Aquaporin-3 (292 aa).

Over 1-24 (MGRQKELVNRCGEMLHIRYRLLRQ) the chain is Cytoplasmic. Residues 25–42 (ALAECLGTLILVMFGCGS) traverse the membrane as a helical segment. Topologically, residues 43 to 56 (VAQVVLSRGTHGGF) are extracellular. A helical membrane pass occupies residues 57-74 (LTINLAFGFAVTLGILIA). Topologically, residues 75 to 78 (GQVS) are cytoplasmic. The discontinuously helical intramembrane region spans 79–92 (GAHLNPAVTFAMCF). Positions 83 to 85 (NPA) match the NPA 1 motif. The Cytoplasmic segment spans residues 93–100 (LAREPWIK). Residues 101-121 (LPVYTLAQTLGAFLGAGIIFG) form a helical membrane-spanning segment. The Extracellular segment spans residues 122–159 (LYYDAIWAFANNQLIVSGPNGTAGIFATYPSGHLDMVN). N141 carries N-linked (GlcNAc...) asparagine glycosylation. The helical transmembrane segment at 160–177 (GFFDQFIGTASLIVCVLA) threads the bilayer. The Cytoplasmic portion of the chain corresponds to 178 to 189 (IVDPYNNPVPRG). A helical membrane pass occupies residues 190-206 (LEAFTVGLVVLVIGTSM). The Extracellular portion of the chain corresponds to 207-210 (GFNS). Positions 211 to 224 (GYAVNPARDFGPRL) form an intramembrane region, discontinuously helical. Residues 215–217 (NPA) carry the NPA 2 motif. Residues 225–242 (FTAIAGWGSEVFTTGRHW) are Extracellular-facing. A helical membrane pass occupies residues 243 to 264 (WWVPIVSPLLGSIAGVFVYQLM). Residues 265 to 292 (IGCHLEPPPPSTDEENVKLSHVKHKEQM) are Cytoplasmic-facing.

This sequence belongs to the MIP/aquaporin (TC 1.A.8) family. Homotetramer; each monomer provides an independent glycerol/water pore. Could also exist in other oligomeric states.

It is found in the cell membrane. The protein localises to the basolateral cell membrane. The catalysed reaction is glycerol(in) = glycerol(out). It carries out the reaction H2O(in) = H2O(out). The enzyme catalyses urea(in) = urea(out). It catalyses the reaction H2O2(out) = H2O2(in). In terms of biological role, aquaglyceroporins form homotetrameric transmembrane channels, with each monomer independently mediating glycerol and water transport across the plasma membrane along their osmotic gradient. Could also be permeable to urea. Also participates in cell permeability to H2O2 and H2O2-mediated signaling. In skin, transports glycerol to the epidermis and stratum corneum, where it maintains hydration, elasticity, and supports lipid biosynthesis for barrier repair. In kidney, contributes to the reabsorption of water, helping the body maintain proper fluid balance. The sequence is that of Aquaporin-3 from Bos taurus (Bovine).